The chain runs to 739 residues: Phosphoribosylformylglycinamidine synthase subunit PurL (739 aa).

Histidine 55 is a catalytic residue. Tyrosine 58 and lysine 97 together coordinate ATP. Glutamate 99 lines the Mg(2+) pocket. Residues serine 100–histidine 103 and arginine 122 contribute to the substrate site. Histidine 101 serves as the catalytic Proton acceptor. Aspartate 123 is a Mg(2+) binding site. Glutamine 246 contributes to the substrate binding site. Aspartate 276 contacts Mg(2+). Residue glutamate 320 to glutamine 322 coordinates substrate. Residues aspartate 502 and glycine 539 each contribute to the ATP site. Asparagine 540 is a Mg(2+) binding site. Position 542 (serine 542) interacts with substrate.

It belongs to the FGAMS family. In terms of assembly, monomer. Part of the FGAM synthase complex composed of 1 PurL, 1 PurQ and 2 PurS subunits.

The protein resides in the cytoplasm. The enzyme catalyses N(2)-formyl-N(1)-(5-phospho-beta-D-ribosyl)glycinamide + L-glutamine + ATP + H2O = 2-formamido-N(1)-(5-O-phospho-beta-D-ribosyl)acetamidine + L-glutamate + ADP + phosphate + H(+). It functions in the pathway purine metabolism; IMP biosynthesis via de novo pathway; 5-amino-1-(5-phospho-D-ribosyl)imidazole from N(2)-formyl-N(1)-(5-phospho-D-ribosyl)glycinamide: step 1/2. Its function is as follows. Part of the phosphoribosylformylglycinamidine synthase complex involved in the purines biosynthetic pathway. Catalyzes the ATP-dependent conversion of formylglycinamide ribonucleotide (FGAR) and glutamine to yield formylglycinamidine ribonucleotide (FGAM) and glutamate. The FGAM synthase complex is composed of three subunits. PurQ produces an ammonia molecule by converting glutamine to glutamate. PurL transfers the ammonia molecule to FGAR to form FGAM in an ATP-dependent manner. PurS interacts with PurQ and PurL and is thought to assist in the transfer of the ammonia molecule from PurQ to PurL. In Lactiplantibacillus plantarum (strain ATCC BAA-793 / NCIMB 8826 / WCFS1) (Lactobacillus plantarum), this protein is Phosphoribosylformylglycinamidine synthase subunit PurL.